Reading from the N-terminus, the 358-residue chain is DNA primase large subunit PriL (358 aa).

[4Fe-4S] cluster-binding residues include Cys-234, Cys-306, Cys-315, and Cys-322. Residues 335–358 (KLDDTDEEELVDWREDEGEEEADA) are disordered. Residues 338 to 358 (DTDEEELVDWREDEGEEEADA) are compositionally biased toward acidic residues.

The protein belongs to the eukaryotic-type primase large subunit family. Heterodimer of a small subunit (PriS) and a large subunit (PriL). [4Fe-4S] cluster is required as a cofactor.

Functionally, regulatory subunit of DNA primase, an RNA polymerase that catalyzes the synthesis of short RNA molecules used as primers for DNA polymerase during DNA replication. Stabilizes and modulates the activity of the small subunit, increasing the rate of DNA synthesis, and conferring RNA synthesis capability. The DNA polymerase activity may enable DNA primase to also catalyze primer extension after primer synthesis. May also play a role in DNA repair. This is DNA primase large subunit PriL from Haloarcula marismortui (strain ATCC 43049 / DSM 3752 / JCM 8966 / VKM B-1809) (Halobacterium marismortui).